The following is a 331-amino-acid chain: Holliday junction branch migration complex subunit RuvB (331 aa).

The tract at residues 1–171 (MTEPLDAALR…FGIIEHLEYY (171 aa)) is large ATPase domain (RuvB-L). ATP-binding positions include leucine 9, arginine 10, glycine 51, lysine 54, threonine 55, threonine 56, 118-120 (EDF), arginine 161, tyrosine 171, and arginine 208. Threonine 55 is a binding site for Mg(2+). The interval 172–242 (TPEEIGTNLL…RAQDALDKLG (71 aa)) is small ATPAse domain (RuvB-S). A head domain (RuvB-H) region spans residues 245–331 (TAGLDERDKK…AESDLGLYTN (87 aa)). Arginine 300 and arginine 305 together coordinate DNA.

Belongs to the RuvB family. Homohexamer. Forms an RuvA(8)-RuvB(12)-Holliday junction (HJ) complex. HJ DNA is sandwiched between 2 RuvA tetramers; dsDNA enters through RuvA and exits via RuvB. An RuvB hexamer assembles on each DNA strand where it exits the tetramer. Each RuvB hexamer is contacted by two RuvA subunits (via domain III) on 2 adjacent RuvB subunits; this complex drives branch migration. In the full resolvosome a probable DNA-RuvA(4)-RuvB(12)-RuvC(2) complex forms which resolves the HJ.

It localises to the cytoplasm. The enzyme catalyses ATP + H2O = ADP + phosphate + H(+). Functionally, the RuvA-RuvB-RuvC complex processes Holliday junction (HJ) DNA during genetic recombination and DNA repair, while the RuvA-RuvB complex plays an important role in the rescue of blocked DNA replication forks via replication fork reversal (RFR). RuvA specifically binds to HJ cruciform DNA, conferring on it an open structure. The RuvB hexamer acts as an ATP-dependent pump, pulling dsDNA into and through the RuvAB complex. RuvB forms 2 homohexamers on either side of HJ DNA bound by 1 or 2 RuvA tetramers; 4 subunits per hexamer contact DNA at a time. Coordinated motions by a converter formed by DNA-disengaged RuvB subunits stimulates ATP hydrolysis and nucleotide exchange. Immobilization of the converter enables RuvB to convert the ATP-contained energy into a lever motion, pulling 2 nucleotides of DNA out of the RuvA tetramer per ATP hydrolyzed, thus driving DNA branch migration. The RuvB motors rotate together with the DNA substrate, which together with the progressing nucleotide cycle form the mechanistic basis for DNA recombination by continuous HJ branch migration. Branch migration allows RuvC to scan DNA until it finds its consensus sequence, where it cleaves and resolves cruciform DNA. This Deinococcus geothermalis (strain DSM 11300 / CIP 105573 / AG-3a) protein is Holliday junction branch migration complex subunit RuvB.